The primary structure comprises 525 residues: Protein-export membrane protein SecD (525 aa).

6 consecutive transmembrane segments (helical) span residues 16–36, 368–388, 395–415, 421–441, 466–486, and 488–508; these read VLLLILFLIGSVVSMSIKGLT, QAIIAGIGALIAVLLIVYFHY, IPVASTSLFEVIIILGIAALI, LPSIAGIIAAIGTGVDQQIVI, AFFIIFASAATTIVAMSFLLV, and FVGTLKGFAVTTILGVLIGVL.

This sequence belongs to the SecD/SecF family. SecD subfamily. As to quaternary structure, part of the protein translocation apparatus. Forms a complex with SecF.

Its subcellular location is the cell membrane. Involved in protein export. In Thermococcus gammatolerans (strain DSM 15229 / JCM 11827 / EJ3), this protein is Protein-export membrane protein SecD.